The sequence spans 209 residues: Uracil phosphoribosyltransferase (209 aa).

Residues Arg79, Arg104, and 131-139 each bind 5-phospho-alpha-D-ribose 1-diphosphate; that span reads DPMLATGNS. Uracil contacts are provided by residues Ile194 and 199-201; that span reads GDA. Residue Asp200 coordinates 5-phospho-alpha-D-ribose 1-diphosphate.

Belongs to the UPRTase family. The cofactor is Mg(2+).

The enzyme catalyses UMP + diphosphate = 5-phospho-alpha-D-ribose 1-diphosphate + uracil. The protein operates within pyrimidine metabolism; UMP biosynthesis via salvage pathway; UMP from uracil: step 1/1. Its activity is regulated as follows. Allosterically activated by GTP. Its function is as follows. Catalyzes the conversion of uracil and 5-phospho-alpha-D-ribose 1-diphosphate (PRPP) to UMP and diphosphate. This Rhizobium leguminosarum bv. trifolii (strain WSM2304) protein is Uracil phosphoribosyltransferase.